The chain runs to 505 residues: GMP synthase [glutamine-hydrolyzing] (505 aa).

Positions 3-190 constitute a Glutamine amidotransferase type-1 domain; the sequence is KVLVVNFGGQ…LRKIARISDV (188 aa). The Nucleophile role is filled by Cys80. Active-site residues include His164 and Glu166. A GMPS ATP-PPase domain is found at 191–380; it reads WRPEDQITRI…LGLPEDVVYR (190 aa). 218–224 is an ATP binding site; the sequence is SGGVDST.

The catalysed reaction is XMP + L-glutamine + ATP + H2O = GMP + L-glutamate + AMP + diphosphate + 2 H(+). The protein operates within purine metabolism; GMP biosynthesis; GMP from XMP (L-Gln route): step 1/1. In terms of biological role, catalyzes the synthesis of GMP from XMP. In Pyrobaculum aerophilum (strain ATCC 51768 / DSM 7523 / JCM 9630 / CIP 104966 / NBRC 100827 / IM2), this protein is GMP synthase [glutamine-hydrolyzing].